The chain runs to 96 residues: Large ribosomal subunit protein eL14 (96 aa).

The protein belongs to the eukaryotic ribosomal protein eL14 family.

This chain is Large ribosomal subunit protein eL14, found in Metallosphaera sedula (strain ATCC 51363 / DSM 5348 / JCM 9185 / NBRC 15509 / TH2).